The sequence spans 245 residues: tRNA pseudouridine synthase A (245 aa).

Asp-52 serves as the catalytic Nucleophile. Tyr-111 contributes to the substrate binding site.

The protein belongs to the tRNA pseudouridine synthase TruA family. Homodimer.

The enzyme catalyses uridine(38/39/40) in tRNA = pseudouridine(38/39/40) in tRNA. Formation of pseudouridine at positions 38, 39 and 40 in the anticodon stem and loop of transfer RNAs. The protein is tRNA pseudouridine synthase A of Bradyrhizobium sp. (strain BTAi1 / ATCC BAA-1182).